A 248-amino-acid chain; its full sequence is Triosephosphate isomerase (248 aa).

Substrate-binding residues include Asn-10 and Lys-12. His-95 functions as the Electrophile in the catalytic mechanism. The active-site Proton acceptor is the Glu-165.

Belongs to the triosephosphate isomerase family. Homodimer.

The catalysed reaction is D-glyceraldehyde 3-phosphate = dihydroxyacetone phosphate. It participates in carbohydrate biosynthesis; gluconeogenesis. Its pathway is carbohydrate degradation; glycolysis; D-glyceraldehyde 3-phosphate from glycerone phosphate: step 1/1. The protein is Triosephosphate isomerase (tpi-1) of Neurospora crassa (strain ATCC 24698 / 74-OR23-1A / CBS 708.71 / DSM 1257 / FGSC 987).